The following is a 224-amino-acid chain: Uracil-DNA glycosylase 2 (224 aa).

Aspartate 64 (proton acceptor) is an active-site residue.

It belongs to the uracil-DNA glycosylase (UDG) superfamily. UNG family.

The protein localises to the cytoplasm. The enzyme catalyses Hydrolyzes single-stranded DNA or mismatched double-stranded DNA and polynucleotides, releasing free uracil.. Its function is as follows. Excises uracil residues from the DNA which can arise as a result of misincorporation of dUMP residues by DNA polymerase or due to deamination of cytosine. In Listeria innocua serovar 6a (strain ATCC BAA-680 / CLIP 11262), this protein is Uracil-DNA glycosylase 2.